A 242-amino-acid polypeptide reads, in one-letter code: Probable transcriptional regulatory protein XOO1543 (242 aa).

This sequence belongs to the TACO1 family.

The protein resides in the cytoplasm. The polypeptide is Probable transcriptional regulatory protein XOO1543 (Xanthomonas oryzae pv. oryzae (strain MAFF 311018)).